The following is a 264-amino-acid chain: Methionine aminopeptidase (264 aa).

Residue H79 coordinates substrate. Residues D97, D108, and H171 each contribute to the a divalent metal cation site. H178 is a substrate binding site. 2 residues coordinate a divalent metal cation: E204 and E235.

This sequence belongs to the peptidase M24A family. Methionine aminopeptidase type 1 subfamily. As to quaternary structure, monomer. Requires Co(2+) as cofactor. Zn(2+) is required as a cofactor. It depends on Mn(2+) as a cofactor. Fe(2+) serves as cofactor.

The catalysed reaction is Release of N-terminal amino acids, preferentially methionine, from peptides and arylamides.. Functionally, removes the N-terminal methionine from nascent proteins. The N-terminal methionine is often cleaved when the second residue in the primary sequence is small and uncharged (Met-Ala-, Cys, Gly, Pro, Ser, Thr, or Val). Requires deformylation of the N(alpha)-formylated initiator methionine before it can be hydrolyzed. The polypeptide is Methionine aminopeptidase (Salmonella typhi).